The following is a 362-amino-acid chain: Atypical chemokine receptor 3 (362 aa).

Over 1–40 (MDLHLFDYSEPGNFSDISWPCNSSDCIVVDTVMCPNMPNK) the chain is Extracellular. N-linked (GlcNAc...) asparagine glycosylation is found at asparagine 13, asparagine 22, and asparagine 39. A helical membrane pass occupies residues 41-61 (SVLLYTLSFIYIFIFVIGMIA). At 62-81 (NSVVVWVNIQAKTTGYDTHC) the chain is on the cytoplasmic side. A helical transmembrane segment spans residues 82 to 102 (YILNLAIADLWVVLTIPVWVV). At 103-118 (SLVQHNQWPMGELTCK) the chain is on the extracellular side. Residues cysteine 117 and cysteine 196 are joined by a disulfide bond. The helical transmembrane segment at 119–139 (VTHLIFSINLFGSIFFLTCMS) threads the bilayer. At 140–162 (VDRYLSITYFTNTPSSRKKMVRR) the chain is on the cytoplasmic side. A helical membrane pass occupies residues 163–183 (VVCILVWLLAFCVSLPDTYYL). Residues 184–213 (KTVTSASNNETYCRSFYPEHSIKEWLIGME) lie on the Extracellular side of the membrane. Residues 214–234 (LVSVVLGFAVPFSIIAVFYFL) traverse the membrane as a helical segment. Topologically, residues 235–252 (LARAISASSDQEKHSSRK) are cytoplasmic. A helical transmembrane segment spans residues 253-273 (IIFSYVVVFLVCWLPYHVAVL). At 274-296 (LDIFSILHYIPFTCRLEHALFTA) the chain is on the extracellular side. Residues 297–319 (LHVTQCLSLVHCCVNPVLYSFIN) form a helical membrane-spanning segment. Residues 320–362 (RNYRYELMKAFIFKYSAKTGLTKLIDASRVSETEYSALEQSTK) are Cytoplasmic-facing. Residues 324-362 (YELMKAFIFKYSAKTGLTKLIDASRVSETEYSALEQSTK) form a C-terminal cytoplasmic tail region. 3 positions are modified to phosphoserine: serine 347, serine 350, and serine 355.

This sequence belongs to the G-protein coupled receptor 1 family. Atypical chemokine receptor subfamily. Homodimer. Can form heterodimers with CXCR4; heterodimerization may regulate CXCR4 signaling activity. Interacts with ARRB1 and ARRB2. In terms of processing, the Ser/Thr residues in the C-terminal cytoplasmic tail may be phosphorylated. Ubiquitinated at the Lys residues in its C-terminal cytoplasmic tail and is essential for correct trafficking from and to the cell membrane. Deubiquitinated by CXCL12-stimulation in a reversible manner. As to expression, expressed in monocytes, basophils, B-cells, umbilical vein endothelial cells (HUVEC) and B-lymphoblastoid cells. Lower expression detected in CD4+ T-lymphocytes and natural killer cells. In the brain, detected in endothelial cells and capillaries, and in mature neurons of the frontal cortex and hippocampus. Expressed in tubular formation in the kidney. Highly expressed in astroglial tumor endothelial, microglial and glioma cells. Expressed at low levels in normal CD34+ progenitor cells, but at very high levels in several myeloid malignant cell lines. Expressed in breast carcinomas but not in normal breast tissue (at protein level).

It is found in the cell membrane. Its subcellular location is the early endosome. The protein resides in the recycling endosome. Functionally, atypical chemokine receptor that controls chemokine levels and localization via high-affinity chemokine binding that is uncoupled from classic ligand-driven signal transduction cascades, resulting instead in chemokine sequestration, degradation, or transcytosis. Also known as interceptor (internalizing receptor) or chemokine-scavenging receptor or chemokine decoy receptor. Acts as a receptor for chemokines CXCL11 and CXCL12/SDF1. Chemokine binding does not activate G-protein-mediated signal transduction but instead induces beta-arrestin recruitment, leading to ligand internalization and activation of MAPK signaling pathway. Required for regulation of CXCR4 protein levels in migrating interneurons, thereby adapting their chemokine responsiveness. In glioma cells, transduces signals via MEK/ERK pathway, mediating resistance to apoptosis. Promotes cell growth and survival. Not involved in cell migration, adhesion or proliferation of normal hematopoietic progenitors but activated by CXCL11 in malignant hemapoietic cells, leading to phosphorylation of ERK1/2 (MAPK3/MAPK1) and enhanced cell adhesion and migration. Plays a regulatory role in CXCR4-mediated activation of cell surface integrins by CXCL12. Required for heart valve development. Regulates axon guidance in the oculomotor system through the regulation of CXCL12 levels. In terms of biological role, (Microbial infection) Acts as a coreceptor with CXCR4 for a restricted number of HIV isolates. The protein is Atypical chemokine receptor 3 of Homo sapiens (Human).